An 85-amino-acid polypeptide reads, in one-letter code: Coiled-coil-helix-coiled-coil-helix domain-containing protein 7 (85 aa).

A CHCH domain is found at 13–55 (INPCLSESDASTRCLDENNYDRERCSTYFLRYKNCRRFWNSIV). Short sequence motifs (cx9C motif) lie at residues 16–26 (CLSESDASTRC) and 37–47 (CSTYFLRYKNC). Intrachain disulfides connect Cys-16/Cys-47 and Cys-26/Cys-37.

Belongs to the CHCHD7 family. In terms of assembly, monomer.

The protein resides in the mitochondrion intermembrane space. The polypeptide is Coiled-coil-helix-coiled-coil-helix domain-containing protein 7 (CHCHD7) (Homo sapiens (Human)).